Reading from the N-terminus, the 229-residue chain is MLKIQNLKKSYGKRTILNNVNMNIPKGKVYALIGPNGAGKSTIMKILTGLVSKTSGSIIFEGREWSRRDLRKIGSIIEEPPLYKNLSAYDNMKVVTTMLGVSESTILPLLNKVGLGNIDKRPVKQFSLGMKQRLGIAISLINSPKLLILDEPTNGLDPIGIQELREIIESFKSEGMTIMISSHILSEVEHLADFIGFIYEGKIILEKEYDGSENLEELFNNQILFEKRR.

The ABC transporter domain occupies 2–225; it reads LKIQNLKKSY…EELFNNQILF (224 aa). 34-41 is an ATP binding site; it reads GPNGAGKS.

The protein belongs to the ABC transporter superfamily.

Its function is as follows. Implicated in the export process of the lantibiotic SrtA. In Streptococcus pyogenes serotype M1, this protein is Lantibiotic transport ATP-binding protein SrtF (srtF).